Here is a 575-residue protein sequence, read N- to C-terminus: DNA mismatch repair protein MutL (575 aa).

This sequence belongs to the DNA mismatch repair MutL/HexB family.

In terms of biological role, this protein is involved in the repair of mismatches in DNA. It is required for dam-dependent methyl-directed DNA mismatch repair. May act as a 'molecular matchmaker', a protein that promotes the formation of a stable complex between two or more DNA-binding proteins in an ATP-dependent manner without itself being part of a final effector complex. The protein is DNA mismatch repair protein MutL of Dictyoglomus thermophilum (strain ATCC 35947 / DSM 3960 / H-6-12).